A 274-amino-acid chain; its full sequence is ATP synthase subunit a (274 aa).

Helical transmembrane passes span 43 to 63 (TLNI…LFVF), 103 to 123 (VIAP…MMDL), 149 to 169 (DVSI…FYSI), 223 to 243 (LIFI…LSLP), and 245 to 265 (AIFH…LTIV).

This sequence belongs to the ATPase A chain family. In terms of assembly, F-type ATPases have 2 components, CF(1) - the catalytic core - and CF(0) - the membrane proton channel. CF(1) has five subunits: alpha(3), beta(3), gamma(1), delta(1), epsilon(1). CF(0) has three main subunits: a(1), b(2) and c(9-12). The alpha and beta chains form an alternating ring which encloses part of the gamma chain. CF(1) is attached to CF(0) by a central stalk formed by the gamma and epsilon chains, while a peripheral stalk is formed by the delta and b chains.

It localises to the cell inner membrane. Its function is as follows. Key component of the proton channel; it plays a direct role in the translocation of protons across the membrane. In Yersinia enterocolitica serotype O:8 / biotype 1B (strain NCTC 13174 / 8081), this protein is ATP synthase subunit a.